The chain runs to 298 residues: UDP-N-acetylenolpyruvoylglucosamine reductase (298 aa).

The region spanning 26-191 (KTGGAADVFV…LDATFSLALE (166 aa)) is the FAD-binding PCMH-type domain. Residue R170 is part of the active site. The active-site Proton donor is the S220. E290 is a catalytic residue.

It belongs to the MurB family. The cofactor is FAD.

It is found in the cytoplasm. It catalyses the reaction UDP-N-acetyl-alpha-D-muramate + NADP(+) = UDP-N-acetyl-3-O-(1-carboxyvinyl)-alpha-D-glucosamine + NADPH + H(+). It participates in cell wall biogenesis; peptidoglycan biosynthesis. In terms of biological role, cell wall formation. In Listeria monocytogenes serovar 1/2a (strain ATCC BAA-679 / EGD-e), this protein is UDP-N-acetylenolpyruvoylglucosamine reductase.